A 345-amino-acid polypeptide reads, in one-letter code: Calcium/calmodulin-dependent protein kinase type 1 (345 aa).

Residues 1 to 23 are disordered; the sequence is MPLFGSKKETAKKSSKKDKDEGK. Residues 31 to 287 form the Protein kinase domain; that stretch reads YILKDLLGTG…CKQALGHPWI (257 aa). ATP contacts are provided by residues 37–45 and lysine 61; that span reads LGTGAFSQV. The active-site Proton acceptor is the aspartate 153. Residues 287 to 327 form an autoinhibitory domain region; it reads ISGNAASTENIHSSVSEQLKKNFAKSRWRQAYHATAVIRQM. Residues 307 to 328 form a calmodulin-binding region; sequence KNFAKSRWRQAYHATAVIRQMR.

It belongs to the protein kinase superfamily. CAMK Ser/Thr protein kinase family. CaMK subfamily. Highly expressed in hepatopancreas and to a lesser extent in gills. Low expression in hemocytes, testis, ovary, heart, eyestalk, muscle and epidermis.

It carries out the reaction L-seryl-[protein] + ATP = O-phospho-L-seryl-[protein] + ADP + H(+). The enzyme catalyses L-threonyl-[protein] + ATP = O-phospho-L-threonyl-[protein] + ADP + H(+). With respect to regulation, activated by Ca(2+)/calmodulin. Binding of calmodulin results in conformational change that relieves intrasteric autoinhibition. In terms of biological role, calcium/calmodulin-dependent protein kinase that operates in the calcium-triggered CaMKK-CaMK1 signaling cascade and, upon calcium influx, regulates transcription activators activity, cell cycle, hormone production, cell differentiation, actin filament organization and neurite outgrowth. Involved in molting. The chain is Calcium/calmodulin-dependent protein kinase type 1 from Macrobrachium nipponense (Oriental river shrimp).